Consider the following 192-residue polypeptide: Holliday junction branch migration complex subunit RuvA (192 aa).

A domain I region spans residues 1 to 64 (MIGRLTGILA…EDGHYLYGFL (64 aa)). Residues 65–143 (TEAERFAFRQ…DATGVSLHPA (79 aa)) are domain II. A flexible linker region spans residues 144-149 (VDDSKQ). Positions 149–192 (QDISNALLALGYNEKEAASAMKQLPADVSTSDGIRAALKLLSKV) are domain III.

Belongs to the RuvA family. In terms of assembly, homotetramer. Forms an RuvA(8)-RuvB(12)-Holliday junction (HJ) complex. HJ DNA is sandwiched between 2 RuvA tetramers; dsDNA enters through RuvA and exits via RuvB. An RuvB hexamer assembles on each DNA strand where it exits the tetramer. Each RuvB hexamer is contacted by two RuvA subunits (via domain III) on 2 adjacent RuvB subunits; this complex drives branch migration. In the full resolvosome a probable DNA-RuvA(4)-RuvB(12)-RuvC(2) complex forms which resolves the HJ.

The protein localises to the cytoplasm. The RuvA-RuvB-RuvC complex processes Holliday junction (HJ) DNA during genetic recombination and DNA repair, while the RuvA-RuvB complex plays an important role in the rescue of blocked DNA replication forks via replication fork reversal (RFR). RuvA specifically binds to HJ cruciform DNA, conferring on it an open structure. The RuvB hexamer acts as an ATP-dependent pump, pulling dsDNA into and through the RuvAB complex. HJ branch migration allows RuvC to scan DNA until it finds its consensus sequence, where it cleaves and resolves the cruciform DNA. The sequence is that of Holliday junction branch migration complex subunit RuvA from Dechloromonas aromatica (strain RCB).